The chain runs to 819 residues: Protein SCARECROW (819 aa).

Disordered stretches follow at residues 6–49 (LFNG…HSER), 65–136 (HNNN…INNN), 212–231 (SQNN…RNNT), and 393–420 (PLST…TTTT). Low complexity predominate over residues 15 to 33 (TTPDETNNNSTSNSSNIST). A compositionally biased stretch (polar residues) spans 79-98 (RTNNTSSLNCSLPATTQKGV). A compositionally biased stretch (low complexity) spans 99–136 (TTTTTTTLASSGNNNNNNNNNNNYHYHNNNNNSIINNN). A coiled-coil region spans residues 418 to 448 (TTTSAELALARKKKEEIKEQKKKDEEGLHLL). A GRAS domain is found at 438–806 (KKKDEEGLHL…LCLLTASAWR (369 aa)). The interval 445–507 (LHLLTLLLQC…RLVSSCLGIY (63 aa)) is leucine repeat I (LRI). A LxCxE motif motif is present at residues 452 to 456 (LQCAE). The tract at residues 526–591 (FQVFNGISPF…GGPPYVRLTG (66 aa)) is VHIID. The VHIID motif lies at 557–561 (VHIID). The segment at 601–633 (ATGKRLSDFANKLGLPFEFFPVAEKVGNIDVEK) is leucine repeat II (LRII). Positions 642-729 (VAVHWLQHSL…QQLLSREIRN (88 aa)) are PFYRE. Residues 732 to 806 (AVGGPSRSGE…LCLLTASAWR (75 aa)) are SAW.

The protein belongs to the GRAS family. Expressed in shoot apical meristem, leaf primordia, between the cortex and the differentiating vessels in lower shoots and in root endodermis.

The protein localises to the nucleus. Its function is as follows. Putative transcription factor involved in asymmetric cell division. In Pisum sativum (Garden pea), this protein is Protein SCARECROW (SCR).